Reading from the N-terminus, the 221-residue chain is Casparian strip membrane protein 3 (221 aa).

Over residues 1–12 the composition is skewed to basic and acidic residues; that stretch reads MDIEKAASRREE. Residues 1 to 28 are disordered; that stretch reads MDIEKAASRREEEEPIVQRPKLDKGKGK. Residues 1 to 58 lie on the Cytoplasmic side of the membrane; it reads MDIEKAASRREEEEPIVQRPKLDKGKGKAHVFAPPMNYNRIMDKHKQEKVSAAGWKRG. A helical membrane pass occupies residues 59–79; sequence VAIFDFVLRLIAAITAMAAAA. Residues 80-109 are Extracellular-facing; that stretch reads KMATTEETLPFFTQFLQFQAEYTDLPTMSS. Residues 110-130 traverse the membrane as a helical segment; that stretch reads FVIVNSIVGGYLTLSLPFSIV. At 131-148 the chain is on the cytoplasmic side; that stretch reads CILRPLAVPPRLFLIICD. A helical membrane pass occupies residues 149-169; that stretch reads TAMMGLTMMAASASAAIVYLA. Residues 170 to 194 lie on the Extracellular side of the membrane; the sequence is HNGNSSSNWLPVCQQFGDFCQGTSG. Asn173 carries N-linked (GlcNAc...) asparagine glycosylation. A helical membrane pass occupies residues 195 to 215; it reads AVVASFIAATLLMFLVILSAF. Residues 216 to 221 lie on the Cytoplasmic side of the membrane; the sequence is ALKRST.

It belongs to the Casparian strip membrane proteins (CASP) family. As to quaternary structure, homodimer and heterodimers.

It is found in the cell membrane. Regulates membrane-cell wall junctions and localized cell wall deposition. Required for establishment of the Casparian strip membrane domain (CSD) and the subsequent formation of Casparian strips, a cell wall modification of the root endodermis that determines an apoplastic barrier between the intraorganismal apoplasm and the extraorganismal apoplasm and prevents lateral diffusion. This chain is Casparian strip membrane protein 3, found in Arabidopsis lyrata subsp. lyrata (Lyre-leaved rock-cress).